The following is a 282-amino-acid chain: Pantothenate synthetase (282 aa).

30–37 is an ATP binding site; the sequence is MGFLHDGH. Residue His37 is the Proton donor of the active site. Gln60 contributes to the (R)-pantoate binding site. Beta-alanine is bound at residue Gln60. An ATP-binding site is contributed by 146–149; sequence GQKD. Position 152 (Gln152) interacts with (R)-pantoate. ATP is bound by residues Ile175 and 183 to 186; that span reads KSSR.

It belongs to the pantothenate synthetase family. As to quaternary structure, homodimer.

It is found in the cytoplasm. It carries out the reaction (R)-pantoate + beta-alanine + ATP = (R)-pantothenate + AMP + diphosphate + H(+). Its pathway is cofactor biosynthesis; (R)-pantothenate biosynthesis; (R)-pantothenate from (R)-pantoate and beta-alanine: step 1/1. Its function is as follows. Catalyzes the condensation of pantoate with beta-alanine in an ATP-dependent reaction via a pantoyl-adenylate intermediate. This is Pantothenate synthetase from Campylobacter jejuni (strain RM1221).